We begin with the raw amino-acid sequence, 252 residues long: Gastrula zinc finger protein XlCGF28.1 (252 aa).

C2H2-type zinc fingers lie at residues 6–28 (FTCNECGKFFSCTSWLNVHLRSH), 34–56 (FTCSECGKFFSCMSRLKVHFRGH), 62–84 (SACTECEKCFSSISQRNIHIRSH), 90–112 (YTCTVCGKIFTRISQFNVHVRSH), 118–140 (FKCTECGKSFICNSQLNLHLRFH), 146–168 (TTCSECGKCFTHTSHLNVHFRVH), 174–196 (FTCTECGKCLTRQYQLTEHSYLH), 202–224 (YTCTECGKCFTRRYHLTEHSYLH), and 230–252 (FTCTECGKGFTRRSHLKAHSHTH).

This sequence belongs to the krueppel C2H2-type zinc-finger protein family.

The protein resides in the nucleus. Functionally, may be involved in transcriptional regulation. This is Gastrula zinc finger protein XlCGF28.1 from Xenopus laevis (African clawed frog).